The following is a 446-amino-acid chain: Tubulin gamma chain (446 aa).

142 to 148 (AGGTGSG) contributes to the GTP binding site.

This sequence belongs to the tubulin family. As to quaternary structure, interacts with mto1. Interacts with mto2.

Its subcellular location is the cytoplasm. The protein localises to the cytoskeleton. The protein resides in the microtubule organizing center. It is found in the spindle pole body. Tubulin is the major constituent of microtubules. The gamma chain is found at microtubule organizing centers (MTOC) such as the spindle poles or the centrosome, suggesting that it is involved in the minus-end nucleation of microtubule assembly. This is Tubulin gamma chain from Schizosaccharomyces pombe (strain 972 / ATCC 24843) (Fission yeast).